Reading from the N-terminus, the 290-residue chain is Arginine and glutamate-rich protein 1 (290 aa).

Residues 1-10 show a composition bias toward polar residues; the sequence is MGSRSRTPSP. Disordered stretches follow at residues 1-137, 193-216, and 249-290; these read MGSR…AKEL, ERRR…KREE, and MDEE…PGAL. A compositionally biased stretch (basic residues) spans 12 to 28; the sequence is GKRRHHKSKHKKRSKSH. 2 stretches are compositionally biased toward basic and acidic residues: residues 29 to 44 and 53 to 76; these read HDHE…DKSS and RERD…DYRH. Phosphoserine is present on residues S77 and S79. The span at 88–99 shows a compositional bias: low complexity; sequence SSSSSDSQYSEQ. Positions 111–269 form a coiled coil; the sequence is FKKLDEQNQM…QEKRVKEEQK (159 aa). Over residues 124-137 the composition is skewed to basic and acidic residues; sequence RLAEMERQRRAKEL. A compositionally biased stretch (basic and acidic residues) spans 249-269; that stretch reads MDEERQRMRKEQEKRVKEEQK.

Belongs to the ARGLU1 family. As to quaternary structure, associates with the U1-snRNP complex; the interaction is enhanced by binding of Arglu1 to a stable intronic sequence RNA (sisRNA) produced from the Arglu1 gene by premature cleavage.

The protein localises to the nucleus. Its subcellular location is the nucleus speckle. Post-transcriptional regulator of gene expression; modulates splicing and premature cleavage at cryptic polyadenylation sites of its own pre-mRNA through binding and regulation of the U1-snRNP complex. This is Arginine and glutamate-rich protein 1 from Drosophila melanogaster (Fruit fly).